A 388-amino-acid polypeptide reads, in one-letter code: Ribosomal RNA large subunit methyltransferase F (388 aa).

Over residues 1 to 22 (MKTNNHNAKQAQTKTAKSNPSK) the composition is skewed to polar residues. The disordered stretch occupies residues 1 to 51 (MKTNNHNAKQAQTKTAKSNPSKEVTKIKPKRVKNKPTAKAAKSTGLKTNAA). The span at 27-36 (IKPKRVKNKP) shows a compositional bias: basic residues.

It belongs to the methyltransferase superfamily. METTL16/RlmF family.

It is found in the cytoplasm. The enzyme catalyses adenosine(1618) in 23S rRNA + S-adenosyl-L-methionine = N(6)-methyladenosine(1618) in 23S rRNA + S-adenosyl-L-homocysteine + H(+). In terms of biological role, specifically methylates the adenine in position 1618 of 23S rRNA. The sequence is that of Ribosomal RNA large subunit methyltransferase F from Vibrio campbellii (strain ATCC BAA-1116).